A 231-amino-acid polypeptide reads, in one-letter code: NAD(+) ADP-ribosyltransferase (231 aa).

The enzyme catalyses NAD(+) + (ADP-D-ribosyl)n-acceptor = nicotinamide + (ADP-D-ribosyl)n+1-acceptor + H(+).. Activity increases up to 5-6 times with Mg(2+) at 50 uM or higher ion concentration. 3-aminobenzamide (3-ABA) inhibits the activity by up to half and nicotinamide to a lesser extent. Zn(2+) inhibits the activity to half-maximal rate but at 500 uM concentration of the ion. Functionally, catalyzes auto- and hetero-ADP ribosylation and produces short oligomers by elongating the ADP-ribose chain (up to 6-mer). Binds DNA non-specifically but with high affinity. Forms very stable complexes with circular DNA wherein the circular DNA confers thermostability compared to linear DNA. This chain is NAD(+) ADP-ribosyltransferase, found in Saccharolobus solfataricus (Sulfolobus solfataricus).